The following is a 321-amino-acid chain: MATH domain and coiled-coil domain-containing protein At3g58260 (321 aa).

The region spanning 6–135 (NNTFTWVIKN…NDEVMVAVAV (130 aa)) is the MATH domain. The stretch at 232–283 (KLDWLEKKLDELFEKKKEEADKIRMQNIEEELKDLRQKCSSLEALLKKEKTG) forms a coiled coil.

The sequence is that of MATH domain and coiled-coil domain-containing protein At3g58260 from Arabidopsis thaliana (Mouse-ear cress).